The chain runs to 575 residues: Transcription factor COE2 (575 aa).

An interaction with DNA region spans residues 62–65 (RKSN). The C5-type zinc-finger motif lies at 150 to 169 (CRVLLTHEVMCSRCCEKKSC). 2 interaction with DNA regions span residues 196-203 (NCLKTAGN) and 235-238 (NNSK). The IPT/TIG domain maps to 253–336 (PCIKAISPSE…KGAPGRFIYT (84 aa)). The segment covering 441–453 (STQGNNQGYIRNT) has biased composition (polar residues). The interval 441–479 (STQGNNQGYIRNTSSISPRGYSSSSTPQQSNYSTSSNSM) is disordered. The span at 454 to 479 (SSISPRGYSSSSTPQQSNYSTSSNSM) shows a compositional bias: low complexity.

It belongs to the COE family. In terms of assembly, forms either a homodimer or a heterodimer with a related family member. Interacts with SIX1.

The protein localises to the nucleus. Transcription factor that, in osteoblasts, activates the decoy receptor for RANKL, TNFRSF11B, which in turn regulates osteoclast differentiation. Acts in synergy with the Wnt-responsive LEF1/CTNNB1 pathway. Recognizes variations of the palindromic sequence 5'-ATTCCCNNGGGAATT-3'. In Bos taurus (Bovine), this protein is Transcription factor COE2 (EBF2).